The chain runs to 123 residues: Large ribosomal subunit protein bL20 (123 aa).

The protein belongs to the bacterial ribosomal protein bL20 family.

Its function is as follows. Binds directly to 23S ribosomal RNA and is necessary for the in vitro assembly process of the 50S ribosomal subunit. It is not involved in the protein synthesizing functions of that subunit. The polypeptide is Large ribosomal subunit protein bL20 (rplT) (Chlamydia muridarum (strain MoPn / Nigg)).